Reading from the N-terminus, the 218-residue chain is Eukaryotic translation initiation factor 3 subunit K (218 aa).

At Ala2 the chain carries N-acetylalanine. Phosphothreonine is present on Thr28. A PCI domain is found at 42 to 204; it reads YDLEANLAVL…SIKPKNIVEK (163 aa). Phosphoserine is present on Ser217.

As to quaternary structure, component of the eukaryotic translation initiation factor 3 (eIF-3) complex, which is composed of 13 subunits: EIF3A, EIF3B, EIF3C, EIF3D, EIF3E, EIF3F, EIF3G, EIF3H, EIF3I, EIF3J, EIF3K, EIF3L and EIF3M. The eIF-3 complex appears to include 3 stable modules: module A is composed of EIF3A, EIF3B, EIF3G and EIF3I; module B is composed of EIF3F, EIF3H, and EIF3M; and module C is composed of EIF3C, EIF3D, EIF3E, EIF3K and EIF3L. EIF3C of module C binds EIF3B of module A and EIF3H of module B, thereby linking the three modules. EIF3J is a labile subunit that binds to the eIF-3 complex via EIF3B. The eIF-3 complex interacts with RPS6KB1 under conditions of nutrient depletion. Mitogenic stimulation leads to binding and activation of a complex composed of MTOR and RPTOR, leading to phosphorylation and release of RPS6KB1 and binding of EIF4B to eIF-3. Interacts with CCND3, but not with CCND1 and CCND2. Ubiquitous, with the highest levels of expression in brain, testis and kidney.

Its subcellular location is the nucleus. It is found in the cytoplasm. Functionally, component of the eukaryotic translation initiation factor 3 (eIF-3) complex, which is required for several steps in the initiation of protein synthesis. The eIF-3 complex associates with the 40S ribosome and facilitates the recruitment of eIF-1, eIF-1A, eIF-2:GTP:methionyl-tRNAi and eIF-5 to form the 43S pre-initiation complex (43S PIC). The eIF-3 complex stimulates mRNA recruitment to the 43S PIC and scanning of the mRNA for AUG recognition. The eIF-3 complex is also required for disassembly and recycling of post-termination ribosomal complexes and subsequently prevents premature joining of the 40S and 60S ribosomal subunits prior to initiation. The eIF-3 complex specifically targets and initiates translation of a subset of mRNAs involved in cell proliferation, including cell cycling, differentiation and apoptosis, and uses different modes of RNA stem-loop binding to exert either translational activation or repression. The chain is Eukaryotic translation initiation factor 3 subunit K from Homo sapiens (Human).